A 221-amino-acid chain; its full sequence is Pectate lyase C (221 aa).

A signal peptide spans M1–A27.

Belongs to the polysaccharide lyase 3 family. It depends on Ca(2+) as a cofactor.

It is found in the secreted. It catalyses the reaction Eliminative cleavage of (1-&gt;4)-alpha-D-galacturonan to give oligosaccharides with 4-deoxy-alpha-D-galact-4-enuronosyl groups at their non-reducing ends.. The catalysed reaction is Eliminative cleavage of (1-&gt;4)-alpha-D-galacturonan methyl ester to give oligosaccharides with 4-deoxy-6-O-methyl-alpha-D-galact-4-enuronosyl groups at their non-reducing ends.. It functions in the pathway glycan metabolism; pectin degradation; 2-dehydro-3-deoxy-D-gluconate from pectin: step 2/5. Its function is as follows. Catalyzes the depolymerization of both polygalacturonate and pectins of methyl esterification degree from 22 to 89%, with an endo mode of action. In contrast to the majority of pectate lyases, displays high activity on highly methylated pectins. Is also able to cleave trigalacturonate to galacturonic acid and unsaturated digalacturonate. The polypeptide is Pectate lyase C (pelC) (Bacillus subtilis (strain 168)).